The following is a 65-amino-acid chain: Small ribosomal subunit protein eS27 (65 aa).

Residues Cys21, Cys24, Cys40, and Cys43 each contribute to the Zn(2+) site. The C4-type zinc finger occupies Cys21–Cys43.

This sequence belongs to the eukaryotic ribosomal protein eS27 family. In terms of assembly, part of the 30S ribosomal subunit. Requires Zn(2+) as cofactor.

The polypeptide is Small ribosomal subunit protein eS27 (Thermoplasma acidophilum (strain ATCC 25905 / DSM 1728 / JCM 9062 / NBRC 15155 / AMRC-C165)).